The chain runs to 728 residues: MAAAASASSPVEFLLRRPAPRRRRLPLAGAFFAPTGLAGATLLRAVASLAASLVAGARPPSQRRNVDALARRLALLSAILESILLDTAAAGAFSDAANLCFRELYVVLFRAELLVSYVASAGRAWALLRSPHLAASFRDLDAELAVVLDVLPAASLRLSHDATGLLDLLRAHCRCRAPAQYHDPDEAALRERLMDALRQFDLGQPPDHPSLQSLLADMGISTAASCRAEIDYLEEQILSQEEDTDLPLVGSVLALLRYCLFAVFDPSNAKALRDWPLSGNRQRLLSIGGGDDTSFSVPKEFSCPISLDLMRDPVVASTGQTYDRPSIIQWIEEGHSTCPNSGQTLADHRLVPNRALRSLISQWCGVYGLQYDSPESNEGMAECVAASCSSRAAMEANKATARILVRMLEDGSENVKAVAAKEIRLLAKTGKQNRAFIADLGAIPLLCRLLLSNDWMAQENAVTALLNLSIFEPNKGRIMEQEGCLRLIVGVLQNGWTTEAKENAAATLFSLSVVHNFKKLIMNEPGAVEELASMLTKGTSRGKKDAVMALFNLSTHPESSARMLESCAVVALIQSLRNDTVSEEAAGALALLMKQPSIVHLVGSSETVITSLVGLMRRGTPKGKENAVSALYEICRRGGSALVQRVAKIPGLNTVIQTITLNGTKRAKKKASLIVKMCQRSQMPSAMALGSTLTVVDRSLVGNNTLRRAASFGSGELSNPISISVQVP.

Positions 296–370 (SVPKEFSCPI…SQWCGVYGLQ (75 aa)) constitute a U-box domain. ARM repeat units lie at residues 441 to 483 (GAIP…EQEG) and 526 to 568 (GAVE…ESCA).

The catalysed reaction is S-ubiquitinyl-[E2 ubiquitin-conjugating enzyme]-L-cysteine + [acceptor protein]-L-lysine = [E2 ubiquitin-conjugating enzyme]-L-cysteine + N(6)-ubiquitinyl-[acceptor protein]-L-lysine.. The protein operates within protein modification; protein ubiquitination. Functionally, possesses E3 ubiquitin-protein ligase in vitro. This is U-box domain-containing protein 4 (PUB4) from Oryza sativa subsp. japonica (Rice).